The chain runs to 213 residues: Uridine kinase (213 aa).

13-20 contacts ATP; sequence GGSCSGKT.

This sequence belongs to the uridine kinase family.

Its subcellular location is the cytoplasm. The enzyme catalyses uridine + ATP = UMP + ADP + H(+). It catalyses the reaction cytidine + ATP = CMP + ADP + H(+). The protein operates within pyrimidine metabolism; CTP biosynthesis via salvage pathway; CTP from cytidine: step 1/3. Its pathway is pyrimidine metabolism; UMP biosynthesis via salvage pathway; UMP from uridine: step 1/1. This Mycoplasma pneumoniae (strain ATCC 29342 / M129 / Subtype 1) (Mycoplasmoides pneumoniae) protein is Uridine kinase (udk).